A 434-amino-acid chain; its full sequence is D-amino acid dehydrogenase (434 aa).

3–17 (VLVLGSGVIGTASAY) provides a ligand contact to FAD.

The protein belongs to the DadA oxidoreductase family. Requires FAD as cofactor.

It carries out the reaction a D-alpha-amino acid + A + H2O = a 2-oxocarboxylate + AH2 + NH4(+). The protein operates within amino-acid degradation; D-alanine degradation; NH(3) and pyruvate from D-alanine: step 1/1. Functionally, oxidative deamination of D-amino acids. This Pseudomonas entomophila (strain L48) protein is D-amino acid dehydrogenase.